Consider the following 382-residue polypeptide: PPE family protein PPE44 (382 aa).

Belongs to the mycobacterial PPE family.

The protein resides in the secreted. It localises to the cell wall. The protein localises to the cell surface. Functionally, virulence factor that modulates host innate immune response. The chain is PPE family protein PPE44 from Mycobacterium tuberculosis (strain CDC 1551 / Oshkosh).